A 215-amino-acid polypeptide reads, in one-letter code: Glycerol-3-phosphate acyltransferase (215 aa).

Transmembrane regions (helical) follow at residues 14-34, 63-83, 92-112, 128-148, and 154-174; these read SSSA…AVVV, TAAA…LWLA, WGAY…PLFL, MAIE…VAVF, and LAAL…SGAA.

Belongs to the PlsY family. In terms of assembly, probably interacts with PlsX.

It localises to the cell inner membrane. The catalysed reaction is an acyl phosphate + sn-glycerol 3-phosphate = a 1-acyl-sn-glycero-3-phosphate + phosphate. The protein operates within lipid metabolism; phospholipid metabolism. Functionally, catalyzes the transfer of an acyl group from acyl-phosphate (acyl-PO(4)) to glycerol-3-phosphate (G3P) to form lysophosphatidic acid (LPA). This enzyme utilizes acyl-phosphate as fatty acyl donor, but not acyl-CoA or acyl-ACP. The sequence is that of Glycerol-3-phosphate acyltransferase from Bordetella bronchiseptica (strain ATCC BAA-588 / NCTC 13252 / RB50) (Alcaligenes bronchisepticus).